A 587-amino-acid polypeptide reads, in one-letter code: Polyphenol oxidase E, chloroplastic (587 aa).

The transit peptide at Met1–Ala87 directs the protein to the chloroplast. 2 disulfide bridges follow: Cys98–Cys114 and Cys113–Cys180. The Cu cation site is built by His179, His197, His206, His328, His332, and His363. The 2'-(S-cysteinyl)-histidine (Cys-His) cross-link spans Cys183–His197.

It belongs to the tyrosinase family. The cofactor is Cu(2+).

Its subcellular location is the plastid. The protein localises to the chloroplast thylakoid lumen. It catalyses the reaction 2 catechol + O2 = 2 1,2-benzoquinone + 2 H2O. Functionally, catalyzes the oxidation of mono- and o-diphenols to o-diquinones. The protein is Polyphenol oxidase E, chloroplastic of Solanum lycopersicum (Tomato).